Reading from the N-terminus, the 254-residue chain is Aspartate/glutamate leucyltransferase (254 aa).

The protein belongs to the R-transferase family. Bpt subfamily.

It localises to the cytoplasm. It carries out the reaction N-terminal L-glutamyl-[protein] + L-leucyl-tRNA(Leu) = N-terminal L-leucyl-L-glutamyl-[protein] + tRNA(Leu) + H(+). It catalyses the reaction N-terminal L-aspartyl-[protein] + L-leucyl-tRNA(Leu) = N-terminal L-leucyl-L-aspartyl-[protein] + tRNA(Leu) + H(+). Functionally, functions in the N-end rule pathway of protein degradation where it conjugates Leu from its aminoacyl-tRNA to the N-termini of proteins containing an N-terminal aspartate or glutamate. The sequence is that of Aspartate/glutamate leucyltransferase from Xylella fastidiosa (strain M23).